The primary structure comprises 210 residues: Thymidylate kinase (210 aa).

10 to 17 (GPEGAGKS) is a binding site for ATP.

It belongs to the thymidylate kinase family.

It catalyses the reaction dTMP + ATP = dTDP + ADP. In terms of biological role, phosphorylation of dTMP to form dTDP in both de novo and salvage pathways of dTTP synthesis. The chain is Thymidylate kinase from Pseudomonas fluorescens (strain Pf0-1).